Here is a 36-residue protein sequence, read N- to C-terminus: Ostricacin-1 (36 aa).

Disulfide bonds link Cys-3–Cys-29, Cys-8–Cys-23, and Cys-13–Cys-30.

Its subcellular location is the secreted. Has antibacterial activity against the Gram-positive bacteria S.aureus 1056 MRSA (MIC=1.25 ug/ml) and S.aureus NCTC 4163 (MIC=6.7 ug/ml), and the Gram-negative bacteria E.coli O157:H7 (MIC=0.96 ug/ml) and E.coli 0111 (MIC=6.7 ug/ml). Does not have antifungal activity against the yeast C.albicans 3153A. The sequence is that of Ostricacin-1 from Struthio camelus (Common ostrich).